The sequence spans 186 residues: MVVVGLGNPGPRYAFTRHNVGFLFLDFLKSKDWKTEKYFAWSRIKLAGNDVALVKPLTYMNLSGLAMPHVLKFFNASPDDIIVVYDDVSLKLGRIRIRKKGSDGGHNGMKSIIQALGTQEIKRIRVGIGDKPEGMDLVDFVLGEFSDEEWIILNKVFEVMKEALEVILIEGTEKAMSIYNSLEVRV.

Residue tyrosine 13 coordinates tRNA. The active-site Proton acceptor is the histidine 18. Positions 59, 61, and 107 each coordinate tRNA.

Belongs to the PTH family. In terms of assembly, monomer.

It localises to the cytoplasm. The catalysed reaction is an N-acyl-L-alpha-aminoacyl-tRNA + H2O = an N-acyl-L-amino acid + a tRNA + H(+). Hydrolyzes ribosome-free peptidyl-tRNAs (with 1 or more amino acids incorporated), which drop off the ribosome during protein synthesis, or as a result of ribosome stalling. Functionally, catalyzes the release of premature peptidyl moieties from peptidyl-tRNA molecules trapped in stalled 50S ribosomal subunits, and thus maintains levels of free tRNAs and 50S ribosomes. This is Peptidyl-tRNA hydrolase from Thermotoga petrophila (strain ATCC BAA-488 / DSM 13995 / JCM 10881 / RKU-1).